The sequence spans 582 residues: Proline--tRNA ligase (582 aa).

It belongs to the class-II aminoacyl-tRNA synthetase family. ProS type 1 subfamily. Homodimer.

It is found in the cytoplasm. It carries out the reaction tRNA(Pro) + L-proline + ATP = L-prolyl-tRNA(Pro) + AMP + diphosphate. In terms of biological role, catalyzes the attachment of proline to tRNA(Pro) in a two-step reaction: proline is first activated by ATP to form Pro-AMP and then transferred to the acceptor end of tRNA(Pro). As ProRS can inadvertently accommodate and process non-cognate amino acids such as alanine and cysteine, to avoid such errors it has two additional distinct editing activities against alanine. One activity is designated as 'pretransfer' editing and involves the tRNA(Pro)-independent hydrolysis of activated Ala-AMP. The other activity is designated 'posttransfer' editing and involves deacylation of mischarged Ala-tRNA(Pro). The misacylated Cys-tRNA(Pro) is not edited by ProRS. This is Proline--tRNA ligase from Mycobacterium ulcerans (strain Agy99).